We begin with the raw amino-acid sequence, 323 residues long: Olfactory receptor 2AE1 (323 aa).

The Extracellular segment spans residues 1–25 (MWQKNQTSLADFILEGLFDDSLTHL). An N-linked (GlcNAc...) asparagine glycan is attached at Asn-5. The chain crosses the membrane as a helical span at residues 26–49 (FLFSLTMVVFLIAVSGNTLTILLI). At 50-57 (CIDPQLHT) the chain is on the cytoplasmic side. A helical membrane pass occupies residues 58–79 (PMYFLLSQLSLMDLMHVSTIIL). The Extracellular segment spans residues 80-100 (KMATNYLSGKKSISFVGCATQ). Cysteines 97 and 189 form a disulfide. A helical membrane pass occupies residues 101-120 (HFLYLCLGGAECFLLAVMSY). At 121–139 (DRYVAICHPLRYAVLMNKK) the chain is on the cytoplasmic side. Residues 140–158 (VGLMMAVMSWLGASVNSLI) traverse the membrane as a helical segment. At 159-195 (HMAILMHFPFCGPRKVYHFYCEFPAVVKLVCGDITVY) the chain is on the extracellular side. A helical membrane pass occupies residues 196–218 (ETTVYISSILLLLPIFLISTSYV). Residues 219–235 (FILQSVIQMRSSGSKRN) are Cytoplasmic-facing. Residues 236-258 (AFATCGSHLTVVSLWFGACIFSY) traverse the membrane as a helical segment. Residues 259-271 (MRPRSQCTLLQNK) lie on the Extracellular side of the membrane. Residues 272-291 (VGSVFYSIITPTLNSLIYTL) traverse the membrane as a helical segment. The Cytoplasmic portion of the chain corresponds to 292-323 (RNKDVAKALRRVLRRDVITQCIQRLQLWLPRV).

It belongs to the G-protein coupled receptor 1 family.

It is found in the cell membrane. Functionally, odorant receptor. In Homo sapiens (Human), this protein is Olfactory receptor 2AE1 (OR2AE1).